A 347-amino-acid polypeptide reads, in one-letter code: MRALGAVVTLLLWGQLFAVELGNDAMDFEDDSCPKPPEIANGYVEHLVRYRCRQFYRLRAEGDGVYTLNDEKQWVNTVAGEKLPECEAVCGKPKHPVDQVQRIIGGSMDAKGSFPWQAKMISRHGLTTGATLISDQWLLTTAKNLFLNHSETASAKDITPTLTLYVGKNQLVEIEKVVLHPNHSVVDIGLIKLKQRVLVTERVMPICLPSKDYIAPGRVGYVSGWGRNANFRFTDRLKYVMLPVADQDKCVVHYENSTVPEKKNLTSPVGVQPILNEHTFCAGLTKYQEDTCYGDAGSAFAIHDMEEDTWYAAGILSFDKSCAVAEYGVYVRATDLKDWVQETMAKN.

Positions 1-18 (MRALGAVVTLLLWGQLFA) are cleaved as a signal peptide. Residues 31–88 (DSCPKPPEIANGYVEHLVRYRCRQFYRLRAEGDGVYTLNDEKQWVNTVAGEKLPECEA) enclose the Sushi domain. Disulfide bonds link C52-C86, C90-C207, C250-C281, and C292-C322. Residues 103–345 (IIGGSMDAKG…LKDWVQETMA (243 aa)) form the Peptidase S1 domain. N-linked (GlcNAc...) asparagine glycans are attached at residues N148, N182, N256, and N264. Residues 259 to 264 (VPEKKN) are interaction with CD163.

It belongs to the peptidase S1 family. Tetramer of two alpha and two beta chains; disulfide-linked. The hemoglobin/haptoglobin complex is composed of a haptoglobin dimer bound to two hemoglobin alpha-beta dimers. Interacts with CD163. Interacts with ERGIC3. In terms of tissue distribution, expressed by the liver and secreted in plasma.

The protein resides in the secreted. Functionally, as a result of hemolysis, hemoglobin is found to accumulate in the kidney and is secreted in the urine. Haptoglobin captures, and combines with free plasma hemoglobin to allow hepatic recycling of heme iron and to prevent kidney damage. Haptoglobin also acts as an antioxidant, has antibacterial activity and plays a role in modulating many aspects of the acute phase response. Hemoglobin/haptoglobin complexes are rapidly cleared by the macrophage CD163 scavenger receptor expressed on the surface of liver Kupfer cells through an endocytic lysosomal degradation pathway. The sequence is that of Haptoglobin (Hp) from Mus musculus (Mouse).